We begin with the raw amino-acid sequence, 193 residues long: Endoribonuclease YbeY (193 aa).

Zn(2+) contacts are provided by histidine 109, histidine 113, and histidine 119. Residues 143 to 193 form a disordered region; it reads GAALREGRREGRAGEAKDRWTRSPTSISTPSRSGSTARGSRAKTSRAGSRT. Positions 147–163 are enriched in basic and acidic residues; it reads REGRREGRAGEAKDRWT. The span at 164–181 shows a compositional bias: low complexity; sequence RSPTSISTPSRSGSTARG.

Belongs to the endoribonuclease YbeY family. It depends on Zn(2+) as a cofactor.

It is found in the cytoplasm. Its function is as follows. Single strand-specific metallo-endoribonuclease involved in late-stage 70S ribosome quality control and in maturation of the 3' terminus of the 16S rRNA. The polypeptide is Endoribonuclease YbeY (Anaeromyxobacter dehalogenans (strain 2CP-C)).